The primary structure comprises 707 residues: Lipase maturation factor 2 (707 aa).

Helical transmembrane passes span 11-31 (FLWG…AQIP), 78-98 (MEMI…FSFL), 102-122 (LVFL…QVFL), 126-146 (WDSL…VHAL), 220-240 (FSVV…FLPF), 256-276 (ILII…VLCC), 306-326 (LYSL…FWTV), 358-378 (ITFP…LKGM), and 398-418 (VIFS…YTYI). Residue Asn483 is glycosylated (N-linked (GlcNAc...) asparagine). Residues 634–654 (LLLHSFIFGIFTIYFLQAMFG) traverse the membrane as a helical segment. Positions 659–707 (PGVAKQRHSKPPNEKKKQKSNSGQGESAAAKSSGHGADTVRRNKKNEKS) are disordered. Residues 696-707 (DTVRRNKKNEKS) show a composition bias toward basic and acidic residues.

The protein belongs to the lipase maturation factor family.

Its subcellular location is the endoplasmic reticulum membrane. Functionally, involved in the maturation of specific proteins in the endoplasmic reticulum. This chain is Lipase maturation factor 2 (lmf2), found in Xenopus tropicalis (Western clawed frog).